Here is a 207-residue protein sequence, read N- to C-terminus: SPRY domain-containing protein 4 (207 aa).

The 196-residue stretch at 12–207 (YRWGTKRWGV…HSGLEVPKGL (196 aa)) folds into the B30.2/SPRY domain. N6-acetyllysine occurs at positions 53 and 130. Lysine 139 bears the N6-succinyllysine mark.

The sequence is that of SPRY domain-containing protein 4 (Spryd4) from Rattus norvegicus (Rat).